The primary structure comprises 157 residues: Neutrophil recruitment protein (157 aa).

The first 19 residues, 1 to 19 (MCSIWLTFFLSFLILNTKA), serve as a signal peptide directing secretion.

The protein belongs to the PBP/GOBP family. In terms of assembly, interacts with mouse TLR1; the interaction promotes activation of canonical NF-kappa-B signaling in host macrophages. Interacts with human TLR1. Interacts with mouse TLR4; the interaction promotes activation of canonical NF-kappa-B signaling in host macrophages. Interacts with human TLR4. In terms of tissue distribution, female salivary gland (at protein level).

The protein localises to the secreted. Functionally, activates MyD88-dependent canonical NF-kappa-B signaling in host macrophages via interaction with host TLR1 and TLR4; this drives the expression of neutrophil chemoattractants, followed by the subsequent influx of neutrophils and recruitment of myeloid cells at the bite site. (Microbial infection) Promotes Zika virus infection in mouse model by facilitating recruitment of flavivirus-permissive myeloid cells at the bite site. In terms of biological role, (Microbial infection) Promotes dengue virus infection in mouse model by facilitating recruitment of flavivirus-permissive myeloid cells at the bite site. This chain is Neutrophil recruitment protein, found in Aedes aegypti (Yellowfever mosquito).